Here is a 364-residue protein sequence, read N- to C-terminus: MQVCWFERFGGGNQLLTVLSSSRTCYARFVNFKVFKRMENYRLRRNMPRTGPCKLLLPLSCGISSSVLLHILNAQIQHELAKSHPSPGFDLHLLVIEPSSISHSSLSYDEGFELLQQTFPLHSFTRIPLHSIFELDPELQEVISQFSKDGFVDDTGLSAKERLDAFRASIPTSTSKVDVDYILITRLVVAFAKKIACRGVLWGDTDTRLAAKTLANVAKGRGSSLTWQVCDGMSPFGVEFNFPLRDLFKAEVDNYASFFPELTRIIIPDEPPSENVLTKNLSIDELMMRYVQTQGEKYPGVMANVTRTASKLQASLMPANVPQCSFCGAFMLNSGNNDGGDTTGASRALELCYACIRSRPELTC.

The protein belongs to the CTU2/NCS2 family.

Its subcellular location is the cytoplasm. The protein operates within tRNA modification; 5-methoxycarbonylmethyl-2-thiouridine-tRNA biosynthesis. Functionally, plays a central role in 2-thiolation of mcm(5)S(2)U at tRNA wobble positions of tRNA(Lys), tRNA(Glu) and tRNA(Gln). May act by forming a heterodimer with ncs6 that ligates sulfur from thiocarboxylated urm1 onto the uridine of tRNAs at wobble position. Prior mcm(5) tRNA modification by the elongator complex is required for 2-thiolation. May also be involved in protein urmylation. The sequence is that of Cytoplasmic tRNA 2-thiolation protein 2 (ncs2) from Aspergillus fumigatus (strain CBS 144.89 / FGSC A1163 / CEA10) (Neosartorya fumigata).